Here is a 49-residue protein sequence, read N- to C-terminus: Putative metallothionein MT1DP (49 aa).

The interval 1–29 (MDLSCSCATGGSCTCASSCKCKEYKCTSC) is beta. A divalent metal cation contacts are provided by Cys5, Cys7, Cys13, Cys15, Cys19, Cys21, Cys26, Cys29, Cys33, Cys34, Cys36, Cys37, Cys41, Cys44, and Cys48. Positions 30–49 (KKNCCSCCPMGCAKCAQGCT) are alpha.

It belongs to the metallothionein superfamily. Type 1 family.

Metallothioneins have a high content of cysteine residues that bind various heavy metals. The sequence is that of Putative metallothionein MT1DP (MT1DP) from Homo sapiens (Human).